The sequence spans 949 residues: RNA polymerase-associated protein RapA (949 aa).

A Helicase ATP-binding domain is found at 164-332 (EVADRIAPRV…FARLRLLDPN (169 aa)). 177–184 (DEVGLGKT) contacts ATP. The short motif at 278 to 281 (DEAH) is the DEAH box element. In terms of domain architecture, Helicase C-terminal spans 474-628 (RVEWLIDTLK…TCPTGNALQH (155 aa)).

It belongs to the SNF2/RAD54 helicase family. RapA subfamily. Interacts with the RNAP. Has a higher affinity for the core RNAP than for the holoenzyme. Its ATPase activity is stimulated by binding to RNAP.

Functionally, transcription regulator that activates transcription by stimulating RNA polymerase (RNAP) recycling in case of stress conditions such as supercoiled DNA or high salt concentrations. Probably acts by releasing the RNAP, when it is trapped or immobilized on tightly supercoiled DNA. Does not activate transcription on linear DNA. Probably not involved in DNA repair. This chain is RNA polymerase-associated protein RapA, found in Stutzerimonas stutzeri (strain A1501) (Pseudomonas stutzeri).